The following is a 484-amino-acid chain: Probable metalloprotease ARX1 (484 aa).

It belongs to the peptidase M24 family. In terms of assembly, component of the nucleoplasmic and cytoplasmic pre-60S ribosomal particles.

It is found in the cytoplasm. Its subcellular location is the nucleus. Probable metalloprotease involved in proper assembly of pre-ribosomal particles during the biogenesis of the 60S ribosomal subunit. Accompanies the pre-60S particles to the cytoplasm. This is Probable metalloprotease ARX1 (ARX1) from Yarrowia lipolytica (strain CLIB 122 / E 150) (Yeast).